The sequence spans 276 residues: Octanoyltransferase LipM (276 aa).

The region spanning 31–246 (GLIPPVIRFY…GFAKSLQIEL (216 aa)) is the BPL/LPL catalytic domain. Catalysis depends on C148, which acts as the Acyl-thioester intermediate.

It belongs to the octanoyltransferase LipM family. In terms of assembly, monomer.

The catalysed reaction is octanoyl-[ACP] + L-lysyl-[protein] = N(6)-octanoyl-L-lysyl-[protein] + holo-[ACP] + H(+). It functions in the pathway protein modification; protein lipoylation via endogenous pathway; protein N(6)-(lipoyl)lysine from octanoyl-[acyl-carrier-protein]. Catalyzes the transfer of endogenously produced octanoic acid from octanoyl-acyl-carrier-protein onto the lipoyl domain of GcvH, an intermediate carrier during protein lipoylation. This Lysinibacillus sphaericus (strain C3-41) protein is Octanoyltransferase LipM.